Consider the following 315-residue polypeptide: L-lactate dehydrogenase (315 aa).

Residues Val-12, Asp-33, and Tyr-65 each contribute to the NAD(+) site. Residues Gln-82, Arg-88, and 120–123 (NPVD) contribute to the substrate site. NAD(+) is bound by residues 118–120 (ISN) and Ser-143. 148-151 (DTSR) lines the substrate pocket. Residues Arg-153 and His-168 each coordinate beta-D-fructose 1,6-bisphosphate. The active-site Proton acceptor is the His-175. Residue Tyr-219 is modified to Phosphotyrosine. Thr-228 provides a ligand contact to substrate.

Belongs to the LDH/MDH superfamily. LDH family. In terms of assembly, homotetramer.

Its subcellular location is the cytoplasm. It carries out the reaction (S)-lactate + NAD(+) = pyruvate + NADH + H(+). Its pathway is fermentation; pyruvate fermentation to lactate; (S)-lactate from pyruvate: step 1/1. Allosterically activated by fructose 1,6-bisphosphate (FBP). Functionally, catalyzes the conversion of lactate to pyruvate. The polypeptide is L-lactate dehydrogenase (Mycoplasmopsis pulmonis (strain UAB CTIP) (Mycoplasma pulmonis)).